The primary structure comprises 470 residues: Poly(A) polymerase catalytic subunit (470 aa).

Active-site residues include Asp192 and Asp194.

It belongs to the poxviridae poly(A) polymerase catalytic subunit family. As to quaternary structure, heterodimer of a large (catalytic) subunit and a small (regulatory) subunit.

It carries out the reaction RNA(n) + ATP = RNA(n)-3'-adenine ribonucleotide + diphosphate. Its function is as follows. Polymerase that creates the 3'-poly(A) tail of mRNA's. This is Poly(A) polymerase catalytic subunit (PAPL) from Odocoileus hemionus (Mule deer).